The primary structure comprises 548 residues: MAELTISSDEIRSAIEKYVSSYSPEVSREEVGVVTDTGDGIAHVEGLPSVMTEELLEFPGGIYGVAMNLEAQEVGAVILGESDKIEEGQEVRRTGKVLSVPVGDDFLGRVVNPLGEPIDGLGEITAEENRALELQAATVVQRQGVSEPMQTGIKAIDSMTPIGRGQRQLLIGDRKTGKTTVAVDTIINQKGNWESGDPQKQVRCIYVAIGQKGSTIAGVKRSLEEAGALEYTTIVAAPASDSPGLKWLAPYAGSAIGQHWMYQGKHVLIVFDDLTKQAEAYRAISLLLRRPPGREAYPGDVFYLHSRLLERCAKLSDEMGAGSMTGLPIIETKANDVSAYIPTNVISITDGQCFLQSDLFNSGQRPAIDVGISVSRVGGSAQINAIRKVTGSLKIDLAQFRELEAFSAFASDLDATSKAQLDRGARLMEVLKQGQGEPLPVEEEVVSLFLGTKGHLDSVPVEDVRRFESEFLAHMRRTHDTVLKDIVETKKLSDDGAKTIADTAEEFKKQFTTSSGESAAPSEPEAEALAADEVGQETVKVNRPAPKK.

172-179 provides a ligand contact to ATP; it reads GDRKTGKT. A disordered region spans residues 510–548; it reads QFTTSSGESAAPSEPEAEALAADEVGQETVKVNRPAPKK. Over residues 514–531 the composition is skewed to low complexity; that stretch reads SSGESAAPSEPEAEALAA.

The protein belongs to the ATPase alpha/beta chains family. F-type ATPases have 2 components, CF(1) - the catalytic core - and CF(0) - the membrane proton channel. CF(1) has five subunits: alpha(3), beta(3), gamma(1), delta(1), epsilon(1). CF(0) has three main subunits: a(1), b(2) and c(9-12). The alpha and beta chains form an alternating ring which encloses part of the gamma chain. CF(1) is attached to CF(0) by a central stalk formed by the gamma and epsilon chains, while a peripheral stalk is formed by the delta and b chains.

The protein localises to the cell membrane. The enzyme catalyses ATP + H2O + 4 H(+)(in) = ADP + phosphate + 5 H(+)(out). Produces ATP from ADP in the presence of a proton gradient across the membrane. The alpha chain is a regulatory subunit. The polypeptide is ATP synthase subunit alpha (Saccharopolyspora erythraea (strain ATCC 11635 / DSM 40517 / JCM 4748 / NBRC 13426 / NCIMB 8594 / NRRL 2338)).